The sequence spans 354 residues: Fructose-bisphosphate aldolase (354 aa).

Serine 50 contacts D-glyceraldehyde 3-phosphate. Residue aspartate 83 is the Proton donor of the active site. Positions 84, 105, 142, and 198 each coordinate Zn(2+). Dihydroxyacetone phosphate is bound at residue glycine 199. Histidine 232 contributes to the Zn(2+) binding site. Residues 233 to 235 (GSS) and 275 to 278 (NIDT) each bind dihydroxyacetone phosphate.

Belongs to the class II fructose-bisphosphate aldolase family. Requires Zn(2+) as cofactor.

The enzyme catalyses beta-D-fructose 1,6-bisphosphate = D-glyceraldehyde 3-phosphate + dihydroxyacetone phosphate. It participates in carbohydrate degradation; glycolysis; D-glyceraldehyde 3-phosphate and glycerone phosphate from D-glucose: step 4/4. Its function is as follows. Catalyzes the aldol condensation of dihydroxyacetone phosphate (DHAP or glycerone-phosphate) with glyceraldehyde 3-phosphate (G3P) to form fructose 1,6-bisphosphate (FBP) in gluconeogenesis and the reverse reaction in glycolysis. The polypeptide is Fructose-bisphosphate aldolase (fba) (Pseudomonas aeruginosa (strain ATCC 15692 / DSM 22644 / CIP 104116 / JCM 14847 / LMG 12228 / 1C / PRS 101 / PAO1)).